The primary structure comprises 538 residues: Myeloid cell nuclear differentiation antigen-like protein (538 aa).

In terms of domain architecture, Pyrin spans 1–87; that stretch reads MAEYKKIVLL…AKKLKTEKAK (87 aa). The tract at residues 120 to 306 is disordered; sequence SYKSVPSSKK…PQPQNQNIPR (187 aa). Composition is skewed to basic and acidic residues over residues 135–153 and 245–262; these read AKTEGEKKNKLTQDQDHLP and RREEETGVKKSKAAKEPD. The segment covering 276–305 has biased composition (low complexity); the sequence is SPILHSSSSASSNIPSATNQKPQPQNQNIP. The 201-residue stretch at 299 to 499 folds into the HIN-200 domain; the sequence is PQNQNIPRGA…CGDHSFVKIK (201 aa).

This sequence belongs to the HIN-200 family. Highest expression observed in spleen and thymus with moderate levels in bone marrow, lung, skin and heart, low levels in muscle, liver and intestine and little or no expression in brain and pancreas.

It is found in the nucleus. Its function is as follows. Suppresses cell growth when expressed ectopically. This Mus musculus (Mouse) protein is Myeloid cell nuclear differentiation antigen-like protein.